The sequence spans 202 residues: uncharacterized protein (202 aa).

This is an uncharacterized protein from Galliformes (FAdV-1).